A 503-amino-acid chain; its full sequence is GMP synthase [glutamine-hydrolyzing] (503 aa).

The region spanning 1–189 is the Glutamine amidotransferase type-1 domain; that stretch reads MVLVLDFGSQ…FLELAGAKRD (189 aa). Residue Cys-78 is the Nucleophile of the active site. Catalysis depends on residues His-164 and Glu-166. One can recognise a GMPS ATP-PPase domain in the interval 190-378; that stretch reads WTPEHVLEEL…LGLPDTLRLR (189 aa). 217–223 provides a ligand contact to ATP; sequence SGGVDSS.

In terms of assembly, homodimer.

It catalyses the reaction XMP + L-glutamine + ATP + H2O = GMP + L-glutamate + AMP + diphosphate + 2 H(+). Its pathway is purine metabolism; GMP biosynthesis; GMP from XMP (L-Gln route): step 1/1. In terms of biological role, catalyzes the synthesis of GMP from XMP. The sequence is that of GMP synthase [glutamine-hydrolyzing] from Thermus thermophilus (strain ATCC BAA-163 / DSM 7039 / HB27).